Here is a 577-residue protein sequence, read N- to C-terminus: CTP synthase (577 aa).

An amidoligase domain region spans residues 1 to 268 (MDPAFIFITG…GALLCERLRL (268 aa)). S14 lines the CTP pocket. S14 contributes to the UTP binding site. Residue 15–20 (SLGKGI) coordinates ATP. Y55 contributes to the L-glutamine binding site. D72 is an ATP binding site. Residues D72 and E142 each contribute to the Mg(2+) site. CTP is bound by residues 149-151 (DIE), 189-194 (KTKPLQ), and K225. Residues 189–194 (KTKPLQ) and K225 contribute to the UTP site. The 243-residue stretch at 333-575 (TVALVGKYVS…VAAGLERKDS (243 aa)) folds into the Glutamine amidotransferase type-1 domain. G396 contributes to the L-glutamine binding site. C423 (nucleophile; for glutamine hydrolysis) is an active-site residue. L-glutamine contacts are provided by residues 424–427 (LGMQ), E447, and R503. Catalysis depends on residues H548 and E550.

It belongs to the CTP synthase family. In terms of assembly, homotetramer.

It carries out the reaction UTP + L-glutamine + ATP + H2O = CTP + L-glutamate + ADP + phosphate + 2 H(+). The enzyme catalyses L-glutamine + H2O = L-glutamate + NH4(+). It catalyses the reaction UTP + NH4(+) + ATP = CTP + ADP + phosphate + 2 H(+). The protein operates within pyrimidine metabolism; CTP biosynthesis via de novo pathway; CTP from UDP: step 2/2. With respect to regulation, allosterically activated by GTP, when glutamine is the substrate; GTP has no effect on the reaction when ammonia is the substrate. The allosteric effector GTP functions by stabilizing the protein conformation that binds the tetrahedral intermediate(s) formed during glutamine hydrolysis. Inhibited by the product CTP, via allosteric rather than competitive inhibition. Functionally, catalyzes the ATP-dependent amination of UTP to CTP with either L-glutamine or ammonia as the source of nitrogen. Regulates intracellular CTP levels through interactions with the four ribonucleotide triphosphates. This is CTP synthase from Treponema pallidum (strain Nichols).